Consider the following 203-residue polypeptide: Cbp/p300-interacting transactivator 1 (203 aa).

Disordered stretches follow at residues 1 to 24 (MPTM…DANQ) and 51 to 86 (TANG…PSFN). The segment covering 61-84 (PTSSSGSTSPIGSPTATPSSKPPS) has biased composition (low complexity). Residues 168–177 (LMSLVVELGL) carry the Nuclear export signal motif.

Belongs to the CITED family. As to quaternary structure, homodimer. Binds to RBM14. Interacts (via N-terminus) with HSPA8; the interaction suppresses the association of CITED1 with p300/CBP and SMAD-mediated transcription transactivation. Interacts (via C-terminus) with TOX3 (via HGM box); the interaction increases estrogen-response element (ERE)-dependent transcription and protection against cell death. Interacts with ESR1; the interaction occurs in a estrogen-dependent manner. Interacts (unphosphorylated form preferentially and via C-terminus) with EP300. Interacts (via C-terminus) with CREBBP. Interacts with EGR2. In terms of processing, phosphorylated. Phosphorylation changes in a cell cycle-dependent manner and reduces its transcriptional cofactor activity. Expressed in calvarial osteoblasts. Expressed in nulliparous mammary epithelial cells; absent in pregnant mice and in lacting mammary glands. Also expressed in mammary tumors (at protein level). Expressed only in melanocytes and testis. Expressed at high levels in the strongly pigmented melanoma cells but at low levels in the weakly pigmented cells.

It is found in the nucleus. The protein resides in the cytoplasm. Transcriptional coactivator of the p300/CBP-mediated transcription complex. Enhances SMAD-mediated transcription by strengthening the functional link between the DNA-binding SMAD transcription factors and the p300/CBP transcription coactivator complex. Stimulates estrogen-dependent transactivation activity mediated by estrogen receptors signaling; stabilizes the interaction of estrogen receptor ESR1 and histone acetyltransferase EP300. Positively regulates TGF-beta signaling through its association with the SMAD/p300/CBP-mediated transcriptional coactivator complex. Induces transcription from estrogen-responsive promoters and protection against cell death. Potentiates EGR2-mediated transcriptional activation activity from the ERBB2 promoter. Acts as an inhibitor of osteoblastic mineralization through a cAMP-dependent parathyroid hormone receptor signaling. May play a role in pigmentation of melanocytes. Associates with chromatin to the estrogen-responsive TGF-alpha promoter region in a estrogen-dependent manner. This is Cbp/p300-interacting transactivator 1 (Cited1) from Mus musculus (Mouse).